A 493-amino-acid chain; its full sequence is Probable mannosyl-oligosaccharide alpha-1,2-mannosidase 1B (493 aa).

The first 18 residues, 1 to 18 (MHLPSLSVALALVSSSLA), serve as a signal peptide directing secretion. 2 N-linked (GlcNAc...) asparagine glycosylation sites follow: N87 and N174. C324 and C353 are oxidised to a cystine. Residue E367 is the Proton donor of the active site. A glycan (N-linked (GlcNAc...) asparagine) is linked at N489.

This sequence belongs to the glycosyl hydrolase 47 family. In terms of assembly, monomer. It depends on Ca(2+) as a cofactor. Requires Mg(2+) as cofactor.

The protein resides in the cytoplasmic vesicle lumen. The enzyme catalyses N(4)-(alpha-D-Man-(1-&gt;2)-alpha-D-Man-(1-&gt;2)-alpha-D-Man-(1-&gt;3)-[alpha-D-Man-(1-&gt;2)-alpha-D-Man-(1-&gt;3)-[alpha-D-Man-(1-&gt;2)-alpha-D-Man-(1-&gt;6)]-alpha-D-Man-(1-&gt;6)]-beta-D-Man-(1-&gt;4)-beta-D-GlcNAc-(1-&gt;4)-beta-D-GlcNAc)-L-asparaginyl-[protein] (N-glucan mannose isomer 9A1,2,3B1,2,3) + 4 H2O = N(4)-(alpha-D-Man-(1-&gt;3)-[alpha-D-Man-(1-&gt;3)-[alpha-D-Man-(1-&gt;6)]-alpha-D-Man-(1-&gt;6)]-beta-D-Man-(1-&gt;4)-beta-D-GlcNAc-(1-&gt;4)-beta-D-GlcNAc)-L-asparaginyl-[protein] (N-glucan mannose isomer 5A1,2) + 4 beta-D-mannose. It carries out the reaction N(4)-(alpha-D-Man-(1-&gt;2)-alpha-D-Man-(1-&gt;2)-alpha-D-Man-(1-&gt;3)-[alpha-D-Man-(1-&gt;3)-[alpha-D-Man-(1-&gt;2)-alpha-D-Man-(1-&gt;6)]-alpha-D-Man-(1-&gt;6)]-beta-D-Man-(1-&gt;4)-beta-D-GlcNAc-(1-&gt;4)-beta-D-GlcNAc)-L-asparaginyl-[protein] (N-glucan mannose isomer 8A1,2,3B1,3) + 3 H2O = N(4)-(alpha-D-Man-(1-&gt;3)-[alpha-D-Man-(1-&gt;3)-[alpha-D-Man-(1-&gt;6)]-alpha-D-Man-(1-&gt;6)]-beta-D-Man-(1-&gt;4)-beta-D-GlcNAc-(1-&gt;4)-beta-D-GlcNAc)-L-asparaginyl-[protein] (N-glucan mannose isomer 5A1,2) + 3 beta-D-mannose. Its pathway is protein modification; protein glycosylation. Functionally, involved in the maturation of Asn-linked oligosaccharides. Progressively trims alpha-1,2-linked mannose residues from Man(9)GlcNAc(2) to produce Man(5)GlcNAc(2). This Aspergillus fumigatus (strain CBS 144.89 / FGSC A1163 / CEA10) (Neosartorya fumigata) protein is Probable mannosyl-oligosaccharide alpha-1,2-mannosidase 1B (mns1B).